Consider the following 355-residue polypeptide: Phenylalanine--tRNA ligase alpha subunit (355 aa).

E273 contributes to the Mg(2+) binding site.

This sequence belongs to the class-II aminoacyl-tRNA synthetase family. Phe-tRNA synthetase alpha subunit type 1 subfamily. In terms of assembly, tetramer of two alpha and two beta subunits. It depends on Mg(2+) as a cofactor.

The protein resides in the cytoplasm. The enzyme catalyses tRNA(Phe) + L-phenylalanine + ATP = L-phenylalanyl-tRNA(Phe) + AMP + diphosphate + H(+). The sequence is that of Phenylalanine--tRNA ligase alpha subunit from Bifidobacterium longum (strain NCC 2705).